The following is a 505-amino-acid chain: Metalloprotease TIKI1 (505 aa).

An N-terminal signal peptide occupies residues 1 to 19 (MSPWSWFLLQTLCLLPTGA). The Extracellular segment spans residues 20–477 (ASRRGAPGTA…RRGHSHHSQM (458 aa)). N-linked (GlcNAc...) asparagine glycosylation is found at Asn-220, Asn-229, Asn-278, and Asn-336. Positions 389–428 (PEAVSSGHSTLPPLVSRPGSADTPSEAEQRFRKKRRRSQR) are disordered. A compositionally biased stretch (basic residues) spans 419–428 (FRKKRRRSQR). A helical membrane pass occupies residues 478–498 (VASSACLSLWTPVFWVLVLAF). Residues 499-505 (QTETPLL) are Cytoplasmic-facing.

This sequence belongs to the TIKI family. Requires Mn(2+) as cofactor. Co(2+) is required as a cofactor.

Its subcellular location is the cell membrane. Functionally, metalloprotease that acts as a negative regulator of the Wnt signaling pathway by mediating the cleavage of the 8 N-terminal residues of a subset of Wnt proteins. Following cleavage, Wnt proteins become oxidized and form large disulfide-bond oligomers, leading to their inactivation. Able to cleave WNT3A, WNT5, but not WNT11. Required for head formation. The sequence is that of Metalloprotease TIKI1 (TRABD2A) from Homo sapiens (Human).